The chain runs to 372 residues: Chorismate synthase (372 aa).

Residue Arg48 coordinates NADP(+). FMN is bound by residues Arg131–Ser133, Asn243–Ala244, Gly288, Lys303–Ser307, and Arg329.

It belongs to the chorismate synthase family. As to quaternary structure, homotetramer. Requires FMNH2 as cofactor.

It carries out the reaction 5-O-(1-carboxyvinyl)-3-phosphoshikimate = chorismate + phosphate. The protein operates within metabolic intermediate biosynthesis; chorismate biosynthesis; chorismate from D-erythrose 4-phosphate and phosphoenolpyruvate: step 7/7. Catalyzes the anti-1,4-elimination of the C-3 phosphate and the C-6 proR hydrogen from 5-enolpyruvylshikimate-3-phosphate (EPSP) to yield chorismate, which is the branch point compound that serves as the starting substrate for the three terminal pathways of aromatic amino acid biosynthesis. This reaction introduces a second double bond into the aromatic ring system. This chain is Chorismate synthase, found in Caulobacter vibrioides (strain ATCC 19089 / CIP 103742 / CB 15) (Caulobacter crescentus).